Consider the following 38-residue polypeptide: Large ribosomal subunit protein bL36 (38 aa).

Belongs to the bacterial ribosomal protein bL36 family.

This chain is Large ribosomal subunit protein bL36, found in Aster yellows witches'-broom phytoplasma (strain AYWB).